Reading from the N-terminus, the 334-residue chain is Trans-3-hydroxy-L-proline dehydratase (334 aa).

The Proton acceptor role is filled by Cys91. Substrate-binding positions include 92–93 (GH), Asp250, and 255–256 (GT).

The protein belongs to the proline racemase family.

The catalysed reaction is trans-3-hydroxy-L-proline = 1-pyrroline-2-carboxylate + H2O. Catalyzes the dehydration of trans-3-hydroxy-L-proline (t3LHyp) to Delta(1)-pyrroline-2-carboxylate (Pyr2C). Is likely involved in a degradation pathway that converts t3LHyp to L-proline. Can also catalyze the epimerization of trans-4-hydroxy-L-proline (t4LHyp) to cis-4-hydroxy-D-proline (c4DHyp) in vitro. Displays no proline racemase activity. This Bacillus thuringiensis subsp. konkukian (strain 97-27) protein is Trans-3-hydroxy-L-proline dehydratase.